Consider the following 672-residue polypeptide: uncharacterized protein (672 aa).

The N-terminal stretch at 1–24 is a signal peptide; the sequence is MKTLKVLKIFIIVYISSVSLESFA. Helical transmembrane passes span 226-246 and 254-274; these read IIGA…ALNK and ITLF…LGPL. A compositionally biased stretch (polar residues) spans 363-372; that stretch reads SNGTSGNNKP. Residues 363-384 are disordered; that stretch reads SNGTSGNNKPIPNFDPDGKKDR. The next 4 helical transmembrane spans lie at 410–430, 436–456, 469–489, and 562–582; these read IILV…LYFI, CMVT…MVLF, VCIS…LLIT, and VVSI…FYYF. Over residues 628-646 the composition is skewed to basic and acidic residues; that stretch reads HGKSSLGDKPDIGNKRKDG. The tract at residues 628–672 is disordered; that stretch reads HGKSSLGDKPDIGNKRKDGAQQGEDAVNSSGGEVADLASGSGGGK.

It belongs to the TrbL/VirB6 family.

It localises to the cell membrane. This is an uncharacterized protein from Rickettsia prowazekii (strain Madrid E).